We begin with the raw amino-acid sequence, 615 residues long: Zinc metalloproteinase R519 (615 aa).

One can recognise a Peptidase M13 domain in the interval 1–611 (MTYRSCIPQN…LDPQLRSRIL (611 aa)). His454 is a binding site for Zn(2+). Residue Glu455 is part of the active site. Positions 458 and 513 each coordinate Zn(2+). Asp517 (proton donor) is an active-site residue.

Belongs to the peptidase M13 family. It depends on Zn(2+) as a cofactor.

Its function is as follows. Zinc metalloprotease. In Acanthamoeba polyphaga (Amoeba), this protein is Zinc metalloproteinase R519.